A 410-amino-acid polypeptide reads, in one-letter code: DNA replication and repair protein RecF (410 aa).

Position 30–37 (30–37) interacts with ATP; that stretch reads GPNGHGKT.

The protein belongs to the RecF family.

Its subcellular location is the cytoplasm. Functionally, the RecF protein is involved in DNA metabolism; it is required for DNA replication and normal SOS inducibility. RecF binds preferentially to single-stranded, linear DNA. It also seems to bind ATP. The polypeptide is DNA replication and repair protein RecF (Rhodococcus opacus (strain B4)).